The following is a 382-amino-acid chain: D-galactonate dehydratase (382 aa).

Aspartate 183 serves as a coordination point for Mg(2+). The Proton donor role is filled by histidine 185. Residues glutamate 209 and glutamate 235 each coordinate Mg(2+). Histidine 285 acts as the Proton acceptor in catalysis.

This sequence belongs to the mandelate racemase/muconate lactonizing enzyme family. GalD subfamily. Mg(2+) serves as cofactor.

The catalysed reaction is D-galactonate = 2-dehydro-3-deoxy-D-galactonate + H2O. The protein operates within carbohydrate acid metabolism; D-galactonate degradation; D-glyceraldehyde 3-phosphate and pyruvate from D-galactonate: step 1/3. Catalyzes the dehydration of D-galactonate to 2-keto-3-deoxy-D-galactonate. The chain is D-galactonate dehydratase from Escherichia coli (strain UTI89 / UPEC).